The sequence spans 309 residues: tRNA pseudouridine synthase B (309 aa).

The Nucleophile role is filled by D39. Positions 229–306 constitute a PUA domain; the sequence is LPRVVVHQES…ERVLTLRKVF (78 aa).

The protein belongs to the pseudouridine synthase TruB family. Type 1 subfamily.

It catalyses the reaction uridine(55) in tRNA = pseudouridine(55) in tRNA. Functionally, responsible for synthesis of pseudouridine from uracil-55 in the psi GC loop of transfer RNAs. This is tRNA pseudouridine synthase B from Thermotoga petrophila (strain ATCC BAA-488 / DSM 13995 / JCM 10881 / RKU-1).